We begin with the raw amino-acid sequence, 3326 residues long: Deoxyribonuclease CdiA (3326 aa).

The tract at residues T36 to S342 is two-partner system transport domain (TPS). Residues Y343 to N1396 form an FHA-1 region. The tract at residues Q1397–D1765 is receptor binding domain (RBD). Residues Y1766 to Q1951 are YP domain. The periplasmic FHA-1 repeat (pFR) stretch occupies residues S1959 to G2097. Positions Q2125 to S2660 are FHA-2. Positions V3060–N3063 match the VENN CT cleavage motif motif. Residues V3060–K3326 are CT domain.

The protein in the N-terminal section; belongs to the CdiA toxin family. As to quaternary structure, the C-terminal (CT) domain interacts with cognate CdiI but not non-cognate CdiI from E.coli strain 536 / UPEC.

The protein resides in the target cell. Its subcellular location is the target cell cytoplasm. Functionally, toxic component of a toxin-immunity protein module, which functions as a cellular contact-dependent growth inhibition (CDI) system. CDI modules allow bacteria to communicate with and inhibit the growth of closely related neighboring bacteria in a contact-dependent fashion. CDI is neutralized by its cognate immunity protein CdiI, but not by non-cognate CdiI from other bacteria. The C-terminal domain (CT) has strong DNase activity; this activity is inhibited by cognate CdiI. In terms of biological role, the CdiA protein is thought to be exported from the cell through the central lumen of CdiB, the other half of its two-partner system (TPS). The TPS domain probably remains associated with CdiB while the FHA-1 domain forms an extended filament with the receptor-binding domain (RBD) at its extremity; in the secretion arrested state the C-terminus of the RBD and YP domains form a hairpin-like structure as the FHA-2, PT and CT domains are periplasmic. The YP domain is probably responsible for this arrest at the point where it re-enters the host cell periplasm. Upon binding to a target cell outer membrane receptor a signal is transmitted to activate secretion. The filament elongates slightly, the rest of CdiA is secreted and the FHA-2 domain becomes stably associated with the target cell's outer membrane where it facilitates entry of the toxic CT domain into the target cell periplasm. From there the toxic CT domain is cleaved and gains access to the target cell cytoplasm via an inner membrane protein. This chain is Deoxyribonuclease CdiA, found in Dickeya dadantii (strain 3937) (Erwinia chrysanthemi (strain 3937)).